We begin with the raw amino-acid sequence, 417 residues long: Serine hydroxymethyltransferase (417 aa).

Residues leucine 121 and glycine 125–leucine 127 each bind (6S)-5,6,7,8-tetrahydrofolate. Position 230 is an N6-(pyridoxal phosphate)lysine (lysine 230). Serine 355–phenylalanine 357 serves as a coordination point for (6S)-5,6,7,8-tetrahydrofolate.

The protein belongs to the SHMT family. Homodimer. Pyridoxal 5'-phosphate is required as a cofactor.

The protein resides in the cytoplasm. The catalysed reaction is (6R)-5,10-methylene-5,6,7,8-tetrahydrofolate + glycine + H2O = (6S)-5,6,7,8-tetrahydrofolate + L-serine. It functions in the pathway one-carbon metabolism; tetrahydrofolate interconversion. Its pathway is amino-acid biosynthesis; glycine biosynthesis; glycine from L-serine: step 1/1. Catalyzes the reversible interconversion of serine and glycine with tetrahydrofolate (THF) serving as the one-carbon carrier. This reaction serves as the major source of one-carbon groups required for the biosynthesis of purines, thymidylate, methionine, and other important biomolecules. Also exhibits THF-independent aldolase activity toward beta-hydroxyamino acids, producing glycine and aldehydes, via a retro-aldol mechanism. The chain is Serine hydroxymethyltransferase from Legionella pneumophila (strain Corby).